Consider the following 353-residue polypeptide: MALSPEKEKALAAAMSQIDRKYGKGSIMRMGEASSKLAIEVIPTGSIALDIALGVGGVPRGRVVEIYGPESSGKTTLAQHIIAEAQKMGGVAAFIDAEHAFDPVYAKRCGVDVDNLLVSQPDYGEQALEICETLVRSNAVDVVVVDSVAALVPRAEIEGDMGDSLPGLQARLMSQALRKLSGAISKSRVVVIFLNQLRLKIGVMFGSPETTTGGQALKFYASVRMDIRRIETLKNGQETIGSRTRVKVVKNKVAPPFRQAEFDIMHNEGISRAGNILDVGVELDIIRKSGAWFYLGEDRLGQGRENAKQFLNENPALADEIERLIRAHAMAAPISIAASKADDVVDDAGLFEE.

An ATP-binding site is contributed by 68 to 75 (GPESSGKT).

It belongs to the RecA family.

It is found in the cytoplasm. Functionally, can catalyze the hydrolysis of ATP in the presence of single-stranded DNA, the ATP-dependent uptake of single-stranded DNA by duplex DNA, and the ATP-dependent hybridization of homologous single-stranded DNAs. It interacts with LexA causing its activation and leading to its autocatalytic cleavage. The protein is Protein RecA of Roseiflexus castenholzii (strain DSM 13941 / HLO8).